The chain runs to 471 residues: Tripartite motif-containing protein 60 (471 aa).

The segment at 16–57 (CPICLEYLKDPVTINCGHNFCRSCLSVSWKDLDDTFPCPVCR) adopts an RING-type zinc-finger fold. The segment at 92 to 133 (KENAMCEKHNQFLTLFCVKDLEILCTQCSFSTKHQKHYICPI) adopts a B box-type zinc-finger fold. Zn(2+)-binding residues include C97, H100, C119, and H125. Positions 171 to 223 (ELKKKVEYKREEINSEFEQIRLFLQNEQEMILRQIQDEEMNILAKLNENLVEL) form a coiled coil. One can recognise a B30.2/SPRY domain in the interval 277 to 470 (FSLPPQYSGL…LKICSVSDSE (194 aa)).

It belongs to the TRIM/RBCC family.

Functionally, E3 SUMO-protein ligase that mediates SUMOylation of TAB2 leading to inhibition of NF-kappa-B and MAPK pathways by suppressing the TRAF6/TAB2/TAK1 complex. The chain is Tripartite motif-containing protein 60 (TRIM60) from Homo sapiens (Human).